Here is a 456-residue protein sequence, read N- to C-terminus: Bacteriochlorophyllide d C-12(1)-methyltransferase (456 aa).

The 228-residue stretch at 178–405 (HAKKYSQLIP…MFEPKKLGGE (228 aa)) folds into the Radical SAM core domain. Positions 194, 198, and 201 each coordinate [4Fe-4S] cluster.

The protein belongs to the radical SAM superfamily. [4Fe-4S] cluster is required as a cofactor.

It localises to the cytoplasm. The enzyme catalyses 8-ethyl-12-methyl-3-vinylbacteriochlorophyllide d + S-adenosyl-L-methionine = 8,12-diethyl-3-vinylbacteriochlorophyllide d + S-adenosyl-L-homocysteine + H(+). Its pathway is porphyrin-containing compound metabolism; bacteriochlorophyll biosynthesis (light-independent). Functionally, involved in the biosynthesis of the major light-harvesting pigment bacteriochlorophyll c (BChlc), which confers a significant competitive advantage to green sulfur bacteria living at limiting red and near-infrared light intensities. BchR is a methyltransferase that adds a single methyl group to the methyl carbon at the C-12(1) position of 8-ethyl-12-methyl-3-vinylbacteriochlorophyllide d to yield 8,12-diethyl-3-vinylbacteriochlorophyllide d. This is Bacteriochlorophyllide d C-12(1)-methyltransferase from Chlorobaculum tepidum (strain ATCC 49652 / DSM 12025 / NBRC 103806 / TLS) (Chlorobium tepidum).